The following is a 400-amino-acid chain: Unsaturated glucuronyl hydrolase (400 aa).

A signal peptide spans 1–20; the sequence is MRKLVYLVLVLGLTFLNVRC. D120 serves as the catalytic Nucleophile. The active-site Proton donor is D181.

Belongs to the glycosyl hydrolase 88 family.

The protein localises to the cell surface. In terms of biological role, unsaturated glucuronyl hydrolase involved in ulvan degradation. Ulvan is the main polysaccharide component of the Ulvales (green seaweed) cell wall. It is composed of disaccharide building blocks comprising 3-sulfated rhamnose (Rha3S) linked to D-glucuronic acid (GlcA), L-iduronic acid (IduA), or D-xylose (Xyl). Unsaturated glucuronyl hydrolase catalyzes the cleavage of the unsaturated 4-deoxy-L-threo-hex-4-enopyranosiduronic acid (deltaUA) at the non-reducing end of ulvan oligomers, thus forming 5-dehydro-4-deoxy-D-glucuronate. This Formosa agariphila (strain DSM 15362 / KCTC 12365 / LMG 23005 / KMM 3901 / M-2Alg 35-1) protein is Unsaturated glucuronyl hydrolase.